The chain runs to 832 residues: uncharacterized protein (832 aa).

This is an uncharacterized protein from Rickettsia bellii (strain RML369-C).